Consider the following 51-residue polypeptide: Insulin (51 aa).

Disulfide bonds link Cys7–Cys37, Cys19–Cys50, and Cys36–Cys41.

Belongs to the insulin family. Heterodimer of a B chain and an A chain linked by two disulfide bonds.

It is found in the secreted. Functionally, insulin decreases blood glucose concentration. It increases cell permeability to monosaccharides, amino acids and fatty acids. It accelerates glycolysis, the pentose phosphate cycle, and glycogen synthesis in liver. The protein is Insulin (INS) of Acomys cahirinus (Cairo spiny mouse).